A 587-amino-acid chain; its full sequence is RuBisCO large subunit-binding protein subunit alpha, chloroplastic (587 aa).

Residues 1–25 are compositionally biased toward polar residues; the sequence is MASTNALSSTSILRSPTNQAQTSLS. The interval 1 to 33 is disordered; sequence MASTNALSSTSILRSPTNQAQTSLSKKVKQHGR. Residues 1–47 constitute a chloroplast transit peptide; that stretch reads MASTNALSSTSILRSPTNQAQTSLSKKVKQHGRVNFRQKPNRFVVKA.

Belongs to the chaperonin (HSP60) family. As to quaternary structure, oligomer of probably six alpha and six beta subunits.

The protein resides in the plastid. The protein localises to the chloroplast. Its function is as follows. This protein binds RuBisCO small and large subunits and is implicated in the assembly of the enzyme oligomer. The sequence is that of RuBisCO large subunit-binding protein subunit alpha, chloroplastic from Pisum sativum (Garden pea).